Consider the following 252-residue polypeptide: 5'-methylthioadenosine/S-adenosylhomocysteine nucleosidase (252 aa).

Glu20 (proton acceptor) is an active-site residue. Substrate contacts are provided by residues Gly86, Ile160, and 181–182 (ME). The active-site Proton donor is the Asp205.

This sequence belongs to the PNP/UDP phosphorylase family. MtnN subfamily. Homodimer.

It carries out the reaction S-adenosyl-L-homocysteine + H2O = S-(5-deoxy-D-ribos-5-yl)-L-homocysteine + adenine. The enzyme catalyses S-methyl-5'-thioadenosine + H2O = 5-(methylsulfanyl)-D-ribose + adenine. It catalyses the reaction 5'-deoxyadenosine + H2O = 5-deoxy-D-ribose + adenine. The protein operates within amino-acid biosynthesis; L-methionine biosynthesis via salvage pathway; S-methyl-5-thio-alpha-D-ribose 1-phosphate from S-methyl-5'-thioadenosine (hydrolase route): step 1/2. In terms of biological role, catalyzes the irreversible cleavage of the glycosidic bond in both 5'-methylthioadenosine (MTA) and S-adenosylhomocysteine (SAH/AdoHcy) to adenine and the corresponding thioribose, 5'-methylthioribose and S-ribosylhomocysteine, respectively. Also cleaves 5'-deoxyadenosine, a toxic by-product of radical S-adenosylmethionine (SAM) enzymes, into 5-deoxyribose and adenine. Thus, is required for in vivo function of the radical SAM enzymes biotin synthase and lipoic acid synthase, that are inhibited by 5'-deoxyadenosine accumulation. In Buchnera aphidicola subsp. Baizongia pistaciae (strain Bp), this protein is 5'-methylthioadenosine/S-adenosylhomocysteine nucleosidase.